The primary structure comprises 642 residues: Zinc finger protein 398 (642 aa).

Disordered stretches follow at residues Met-1–Pro-24 and Glu-198–Ser-225. Residues Val-143–Ile-214 form the KRAB domain. Over residues Ala-207–Glu-220 the composition is skewed to acidic residues. A Glycyl lysine isopeptide (Lys-Gly) (interchain with G-Cter in SUMO2) cross-link involves residue Lys-265. The C2H2-type 1; atypical zinc finger occupies Phe-343–His-364. The segment at Leu-370–His-392 adopts a C2H2-type 2; degenerate zinc-finger fold. C2H2-type zinc fingers lie at residues Pro-398–His-420, Phe-427–His-449, Phe-455–His-477, Phe-483–His-505, Tyr-511–His-533, Phe-539–His-561, and Tyr-567–His-590. The disordered stretch occupies residues Arg-587–Leu-615.

The protein belongs to the krueppel C2H2-type zinc-finger protein family.

Its subcellular location is the nucleus. In terms of biological role, functions as a transcriptional activator. This chain is Zinc finger protein 398 (ZNF398), found in Homo sapiens (Human).